Reading from the N-terminus, the 250-residue chain is Non-specific acid phosphatase (250 aa).

An N-terminal signal peptide occupies residues 1–20 (MKSRYLLFFLPLIVAKYTSA).

Belongs to the class A bacterial acid phosphatase family. Homodimer.

Its subcellular location is the periplasm. The enzyme catalyses a phosphate monoester + H2O = an alcohol + phosphate. In Salmonella typhi, this protein is Non-specific acid phosphatase (phoN).